A 729-amino-acid chain; its full sequence is Capsid protein VP1 (729 aa).

The segment covering 1 to 10 (MAPPAKRAKR) has biased composition (basic residues). Disordered stretches follow at residues 1 to 38 (MAPP…SDAA), 96 to 115 (LATD…KRTR), and 130 to 185 (KLTS…VGVS). A Nuclear localization signal motif is present at residues 4–13 (PAKRAKRGWV). The phospholipase A2-like stretch occupies residues 19–64 (YLGPGNSLDQGEPTNPSDAAAKEHDEAYDQYIKSGKNPYLYFSAAD). Polar residues predominate over residues 25–35 (SLDQGEPTNPS). Over residues 132-142 (TSSAAQQSSQT) the composition is skewed to low complexity. Positions 143 to 152 (MSDGTSQPDS) are enriched in polar residues. Residues 168-184 (GPGGSGGGGSGGGGVGV) show a composition bias toward gly residues. N325 contributes to the Mg(2+) binding site.

The protein belongs to the parvoviridae capsid protein family.

The protein localises to the virion. Its subcellular location is the host nucleus. Its function is as follows. Capsid protein self-assembles to form an icosahedral capsid with a T=1 symmetry, about 22 nm in diameter, and consisting of 60 copies of two size variants of the capsid proteins, VP1 and VP2, which differ by the presence of an N-terminal extension in the minor protein VP1. The capsid encapsulates the genomic ssDNA. Capsid proteins are responsible for the attachment to host cell receptors. This attachment induces virion internalization predominantly through clathrin-dependent endocytosis. Binding to the host receptors also induces capsid rearrangements leading to surface exposure of VP1 N-terminus, specifically its phospholipase A2-like region and putative nuclear localization signal(s). VP1 N-terminus might serve as a lipolytic enzyme to breach the endosomal membrane during entry into host cell and might contribute to virus transport to the nucleus. The protein is Capsid protein VP1 of Mus musculus (Mouse).